The following is a 1221-amino-acid chain: DNA-directed RNA polymerase subunit beta (1221 aa).

Positions 1176 to 1221 (EKKKLAEEEAEIAAEAEAEGSAEGDAAEADADANEAETADDDKASK) are disordered. Residues 1183–1215 (EEAEIAAEAEAEGSAEGDAAEADADANEAETAD) show a composition bias toward acidic residues.

Belongs to the RNA polymerase beta chain family. In terms of assembly, the RNAP catalytic core consists of 2 alpha, 1 beta, 1 beta' and 1 omega subunit. When a sigma factor is associated with the core the holoenzyme is formed, which can initiate transcription.

It catalyses the reaction RNA(n) + a ribonucleoside 5'-triphosphate = RNA(n+1) + diphosphate. Its function is as follows. DNA-dependent RNA polymerase catalyzes the transcription of DNA into RNA using the four ribonucleoside triphosphates as substrates. This Lactobacillus delbrueckii subsp. bulgaricus (strain ATCC 11842 / DSM 20081 / BCRC 10696 / JCM 1002 / NBRC 13953 / NCIMB 11778 / NCTC 12712 / WDCM 00102 / Lb 14) protein is DNA-directed RNA polymerase subunit beta.